Consider the following 722-residue polypeptide: Probable cation-transporting ATPase HI_0290 (722 aa).

One can recognise an HMA domain in the interval 9–75; it reads KKISIQIGGM…IIHKTGFSAH (67 aa). A metal cation is bound by residues Cys-20 and Cys-23. The next 6 helical transmembrane spans lie at 94 to 114, 118 to 138, 157 to 177, 180 to 200, 340 to 360, and 373 to 393; these read LIVL…MIGG, LMLP…WLAI, VLVS…LFYH, HAMG…VSLG, VFVP…YILT, and VLVI…IMVG. Asp-422 acts as the 4-aspartylphosphate intermediate in catalysis. The next 4 helical transmembrane spans lie at 523–543, 608–628, 675–695, and 697–717; these read IWQI…GAFA, LGHI…LASA, LFFA…GFLS, and IIAG…ALRL. The Mg(2+) site is built by Asp-617 and Asp-621.

It belongs to the cation transport ATPase (P-type) (TC 3.A.3) family. Type IB subfamily.

It is found in the cell membrane. It carries out the reaction ATP + H2O = ADP + phosphate + H(+). In Haemophilus influenzae (strain ATCC 51907 / DSM 11121 / KW20 / Rd), this protein is Probable cation-transporting ATPase HI_0290.